Reading from the N-terminus, the 220-residue chain is 7-cyano-7-deazaguanine synthase (220 aa).

Residue 10–20 (FSGGQDSTTCL) coordinates ATP. C186, C195, C198, and C201 together coordinate Zn(2+).

It belongs to the QueC family. As to quaternary structure, homodimer. The cofactor is Zn(2+).

It catalyses the reaction 7-carboxy-7-deazaguanine + NH4(+) + ATP = 7-cyano-7-deazaguanine + ADP + phosphate + H2O + H(+). It functions in the pathway purine metabolism; 7-cyano-7-deazaguanine biosynthesis. Its function is as follows. Catalyzes the ATP-dependent conversion of 7-carboxy-7-deazaguanine (CDG) to 7-cyano-7-deazaguanine (preQ(0)). In Bacillus cereus (strain B4264), this protein is 7-cyano-7-deazaguanine synthase.